Here is a 323-residue protein sequence, read N- to C-terminus: Breast cancer metastasis-suppressor 1-like protein (323 aa).

A compositionally biased stretch (basic and acidic residues) spans 1 to 15 (MPVHSREKKENNHDE). Residues 1-56 (MPVHSREKKENNHDEMEVDYGENEGSTSEEEETESSSVSEEGDSSEMDDEDCERRR) form a disordered region. The segment covering 16 to 51 (MEVDYGENEGSTSEEEETESSSVSEEGDSSEMDDED) has biased composition (acidic residues). Coiled-coil stretches lie at residues 50 to 82 (EDCE…KERL) and 147 to 178 (EKLL…ITSE).

The protein belongs to the BRMS1 family.

Its subcellular location is the nucleus. Functionally, involved in the histone deacetylase (HDAC1)-dependent transcriptional repression activity. This chain is Breast cancer metastasis-suppressor 1-like protein (BRMS1L), found in Gallus gallus (Chicken).